Here is a 339-residue protein sequence, read N- to C-terminus: Cathepsin B (339 aa).

The signal sequence occupies residues 1 to 17; sequence MWWLWASLCCLLALGDA. The propeptide at 18-79 is activation peptide; that stretch reads RSRPSFHPLS…QRVMFTEDLK (62 aa). 6 cysteine pairs are disulfide-bonded: C93-C122, C105-C150, C141-C207, C142-C146, C179-C211, and C187-C198. C108 is a catalytic residue. The N-linked (GlcNAc...) asparagine glycan is linked to N192. Position 220 is an N6-acetyllysine (K220). Catalysis depends on residues H278 and N298. Positions 334–339 are excised as a propeptide; that stretch reads QYWEKI.

It belongs to the peptidase C1 family. Dimer of a heavy chain and a light chain cross-linked by a disulfide bond. Interacts with SRPX2. Directly interacts with SHKBP1.

Its subcellular location is the lysosome. It is found in the melanosome. It localises to the secreted. The protein localises to the extracellular space. The protein resides in the apical cell membrane. It carries out the reaction Hydrolysis of proteins with broad specificity for peptide bonds. Preferentially cleaves -Arg-Arg-|-Xaa bonds in small molecule substrates (thus differing from cathepsin L). In addition to being an endopeptidase, shows peptidyl-dipeptidase activity, liberating C-terminal dipeptides.. In terms of biological role, thiol protease which is believed to participate in intracellular degradation and turnover of proteins. Cleaves matrix extracellular phosphoglycoprotein MEPE. Involved in the solubilization of cross-linked TG/thyroglobulin in the thyroid follicle lumen. Has also been implicated in tumor invasion and metastasis. In Macaca fascicularis (Crab-eating macaque), this protein is Cathepsin B (CTSB).